A 382-amino-acid chain; its full sequence is Probable dual-specificity RNA methyltransferase RlmN (382 aa).

Catalysis depends on Glu-118, which acts as the Proton acceptor. One can recognise a Radical SAM core domain in the interval 124 to 370 (YDKRVTMCIS…TTVRDTRGSD (247 aa)). An intrachain disulfide couples Cys-131 to Cys-375. Residues Cys-138, Cys-142, and Cys-145 each contribute to the [4Fe-4S] cluster site. Residues 196–197 (GE), Ser-230, 253–255 (SLH), and Asn-332 each bind S-adenosyl-L-methionine. The active-site S-methylcysteine intermediate is the Cys-375.

The protein belongs to the radical SAM superfamily. RlmN family. It depends on [4Fe-4S] cluster as a cofactor.

Its subcellular location is the cytoplasm. The catalysed reaction is adenosine(2503) in 23S rRNA + 2 reduced [2Fe-2S]-[ferredoxin] + 2 S-adenosyl-L-methionine = 2-methyladenosine(2503) in 23S rRNA + 5'-deoxyadenosine + L-methionine + 2 oxidized [2Fe-2S]-[ferredoxin] + S-adenosyl-L-homocysteine. It catalyses the reaction adenosine(37) in tRNA + 2 reduced [2Fe-2S]-[ferredoxin] + 2 S-adenosyl-L-methionine = 2-methyladenosine(37) in tRNA + 5'-deoxyadenosine + L-methionine + 2 oxidized [2Fe-2S]-[ferredoxin] + S-adenosyl-L-homocysteine. Its function is as follows. Specifically methylates position 2 of adenine 2503 in 23S rRNA and position 2 of adenine 37 in tRNAs. The protein is Probable dual-specificity RNA methyltransferase RlmN of Kocuria rhizophila (strain ATCC 9341 / DSM 348 / NBRC 103217 / DC2201).